The sequence spans 115 residues: Ribonuclease P protein component (115 aa).

It belongs to the RnpA family. Consists of a catalytic RNA component (M1 or rnpB) and a protein subunit.

The enzyme catalyses Endonucleolytic cleavage of RNA, removing 5'-extranucleotides from tRNA precursor.. RNaseP catalyzes the removal of the 5'-leader sequence from pre-tRNA to produce the mature 5'-terminus. It can also cleave other RNA substrates such as 4.5S RNA. The protein component plays an auxiliary but essential role in vivo by binding to the 5'-leader sequence and broadening the substrate specificity of the ribozyme. This is Ribonuclease P protein component from Bacillus cereus (strain 03BB102).